A 721-amino-acid chain; its full sequence is Dipeptidyl-peptidase 5 (721 aa).

An N-terminal signal peptide occupies residues 1-18; that stretch reads MGAFRWLSIAAAASTALA. N-linked (GlcNAc...) asparagine glycosylation is found at N75, N94, N151, and N254. Residues 271-297 form a disordered region; it reads ARPINGPDSPGTPKGIKGDSSSPVFSP. Residues N380 and N450 are each glycosylated (N-linked (GlcNAc...) asparagine). S560 functions as the Charge relay system in the catalytic mechanism. Residue N607 is glycosylated (N-linked (GlcNAc...) asparagine). Catalysis depends on charge relay system residues D643 and H675.

Belongs to the peptidase S9C family. N-glycosylated. Expressed in mycelia and conidia.

Its subcellular location is the secreted. Functionally, may be involved in metabolism of dipeptides or may affect host defense mechanisms. Has a substrate specificity limited to the hydrolysis of X-Ala, His-Ser, and Ser-Tyr dipeptides at a neutral pH optimum. The sequence is that of Dipeptidyl-peptidase 5 from Aspergillus fumigatus (strain CBS 144.89 / FGSC A1163 / CEA10) (Neosartorya fumigata).